Here is a 417-residue protein sequence, read N- to C-terminus: Sulfite reductase, dissimilatory-type subunit alpha (417 aa).

Residues C170, C176, C214, C218, C264, C284, C287, and C290 each contribute to the [4Fe-4S] cluster site. C218 is a siroheme binding site.

The cofactor is [4Fe-4S] cluster. It depends on siroheme as a cofactor.

It carries out the reaction [DsrC protein]-trisulfide + NAD(+) + 3 H2O = [DsrC protein]-dithiol + sulfite + NADH + 3 H(+). In terms of biological role, catalyzes the reduction of sulfite to sulfide. This is the terminal oxidation reaction in sulfate respiration. This chain is Sulfite reductase, dissimilatory-type subunit alpha (dsrA), found in Allochromatium vinosum (strain ATCC 17899 / DSM 180 / NBRC 103801 / NCIMB 10441 / D) (Chromatium vinosum).